A 228-amino-acid polypeptide reads, in one-letter code: GDT1-like protein 5 (228 aa).

The residue at position 2 (Gly2) is an N-acetylglycine. 6 helical membrane passes run Leu12–Ala32, Leu39–Gly59, Thr71–Phe91, Pro133–Gly153, Leu173–Gly193, and Ile205–Pro225.

The protein belongs to the GDT1 family.

It is found in the membrane. This chain is GDT1-like protein 5, found in Arabidopsis thaliana (Mouse-ear cress).